The primary structure comprises 161 residues: 3-hydroxyacyl-[acyl-carrier-protein] dehydratase FabZ (161 aa).

The active site involves His55.

The protein belongs to the thioester dehydratase family. FabZ subfamily.

The protein localises to the cytoplasm. It catalyses the reaction a (3R)-hydroxyacyl-[ACP] = a (2E)-enoyl-[ACP] + H2O. Functionally, involved in unsaturated fatty acids biosynthesis. Catalyzes the dehydration of short chain beta-hydroxyacyl-ACPs and long chain saturated and unsaturated beta-hydroxyacyl-ACPs. This Jannaschia sp. (strain CCS1) protein is 3-hydroxyacyl-[acyl-carrier-protein] dehydratase FabZ.